Here is a 227-residue protein sequence, read N- to C-terminus: MAHISQISSFLSIVLIFLALCITLFTNPTLSLPALKLNPFQDFCVADLQATPTNSGYPCKSQVTSEDFFYSGLNTPLNTSNPKGIAANPANLLTFPGLNTLGISMYNVAIAPGGYNQPHSHPGVTEAGVVIEGSVLVGFLTTNYTLYSKVIGPGDMFVIPPGLIHYEGNVGKTQCRLLTVVADDLPSEVGVPHTLLATKPAIPNEVLISAFKADSKTINMLRSKFTA.

The first 26 residues, 1–26, serve as a signal peptide directing secretion; sequence MAHISQISSFLSIVLIFLALCITLFT. Cys44 and Cys59 form a disulfide bridge. The 149-residue stretch at 71–219 folds into the Cupin type-1 domain; that stretch reads SGLNTPLNTS…AFKADSKTIN (149 aa). Asn78 carries an N-linked (GlcNAc...) asparagine glycan. Positions 119, 121, and 126 each coordinate Mn(2+). An N-linked (GlcNAc...) asparagine glycan is attached at Asn143. His165 serves as a coordination point for Mn(2+).

Belongs to the germin family. Oligomer (believed to be a pentamer but probably hexamer).

It is found in the secreted. It localises to the extracellular space. Its subcellular location is the apoplast. Its function is as follows. May play a role in plant defense. Probably has no oxalate oxidase activity even if the active site is conserved. This Arabidopsis thaliana (Mouse-ear cress) protein is Germin-like protein subfamily T member 3.